Here is a 185-residue protein sequence, read N- to C-terminus: Adenylate kinase (185 aa).

Position 8-16 (G8–T16) interacts with ATP.

The protein belongs to the archaeal adenylate kinase family.

It localises to the cytoplasm. It carries out the reaction AMP + ATP = 2 ADP. This chain is Adenylate kinase (adkA), found in Methanothermobacter thermautotrophicus (strain ATCC 29096 / DSM 1053 / JCM 10044 / NBRC 100330 / Delta H) (Methanobacterium thermoautotrophicum).